Reading from the N-terminus, the 477-residue chain is MSTPQLMQGMQKDLTCQLCLELFRAPVTPECGHTFCQGCLTGVPKNQDQNGSTPCPTCQSPSRPETLQINRQLEHLVQSFKQVPQGHCLEHMDPLSVYCEQDKELICGVCASLGKHKGHNIITASEAFAKLKRQLPQQQVILQEARLKKEKTVAVLDRQVAEVQDTVSRFKGNVKHQLNAMRSYLNIMEASLGKEADKAESAATEALLVERKTMGHYLDQLRQMEGVLKDVEGQEQTEFLRKYCVVAARLNKILSESPPPGRLDIQLPIISDEFKFQVWRKMFRALMPALENMTFDPDTAQQYLVVSSEGKSVECADQKQSVSDEPNRFDKSNCLVSKQSFTEGEHYWEVIVEDKPRWALGIISETANRKGKLHATPSNGFWIIGCKEGKVYEAHTEQKEPRVLRVEGRPEKIGVYLSFSDGVVSFFDSSDEDNLKLLYTFNERFSGRLHPFFDVCWHDKGKNSQPLKIFYPPAEQL.

16 residues coordinate Zn(2+): L14, Q17, P29, C31, T34, Q37, T53, P56, G86, L89, V97, E100, L105, G108, G114, and K117. An RING-type zinc finger spans residues 16 to 59 (CQLCLELFRAPVTPECGHTFCQGCLTGVPKNQDQNGSTPCPTCQ). The segment at 83-124 (VPQGHCLEHMDPLSVYCEQDKELICGVCASLGKHKGHNIITA) adopts a B box-type zinc-finger fold. Residues 135–232 (LPQQQVILQE…QMEGVLKDVE (98 aa)) are a coiled coil. In terms of domain architecture, B30.2/SPRY spans 272-476 (DEFKFQVWRK…LKIFYPPAEQ (205 aa)).

It belongs to the TRIM/RBCC family. In terms of assembly, homodimer. Homooligomer; disulfide-linked. Oligomerizes on the phospholipid membrane. In terms of processing, disulfide bond formation at Cys-244 occurs in case of membrane damage that cause the entry of the oxidized milieu of the extracellular space, resulting in homooligomerization.

Its subcellular location is the cell membrane. It localises to the sarcolemma. The protein resides in the cytoplasmic vesicle membrane. The catalysed reaction is S-ubiquitinyl-[E2 ubiquitin-conjugating enzyme]-L-cysteine + [acceptor protein]-L-lysine = [E2 ubiquitin-conjugating enzyme]-L-cysteine + N(6)-ubiquitinyl-[acceptor protein]-L-lysine.. It participates in protein modification; protein ubiquitination. Its activity is regulated as follows. Specifically binds phosphatidylserine. The binding to phospholipids enhances ubiquitination activity. Functionally, muscle-specific E3 ubiquitin-protein ligase that plays a central role in cell membrane repair by nucleating the assembly of the repair machinery at injury sites. Acts as a sensor of oxidation: upon membrane damage, entry of extracellular oxidative environment results in disulfide bond formation and homooligomerization at the injury site. This oligomerization acts as a nucleation site for recruitment of TRIM72-containing vesicles to the injury site, leading to membrane patch formation. Probably acts upstream of the Ca(2+)-dependent membrane resealing process. Required for transport of DYSF to sites of cell injury during repair patch formation. Regulates membrane budding and exocytosis. May be involved in the regulation of the mobility of KCNB1-containing endocytic vesicles. This Xenopus laevis (African clawed frog) protein is Tripartite motif-containing protein 72 (trim72).